The primary structure comprises 175 residues: Adenine phosphoribosyltransferase (175 aa).

The protein belongs to the purine/pyrimidine phosphoribosyltransferase family. As to quaternary structure, homodimer.

It localises to the cytoplasm. It catalyses the reaction AMP + diphosphate = 5-phospho-alpha-D-ribose 1-diphosphate + adenine. It participates in purine metabolism; AMP biosynthesis via salvage pathway; AMP from adenine: step 1/1. Catalyzes a salvage reaction resulting in the formation of AMP, that is energically less costly than de novo synthesis. This chain is Adenine phosphoribosyltransferase, found in Francisella tularensis subsp. tularensis (strain WY96-3418).